Reading from the N-terminus, the 246-residue chain is Probable transcriptional regulatory protein GWCH70_2524 (246 aa).

This sequence belongs to the TACO1 family.

The protein localises to the cytoplasm. The chain is Probable transcriptional regulatory protein GWCH70_2524 from Geobacillus sp. (strain WCH70).